The following is a 291-amino-acid chain: Lipoyl synthase (291 aa).

[4Fe-4S] cluster contacts are provided by Cys-43, Cys-48, Cys-54, Cys-69, Cys-73, Cys-76, and Ser-280. One can recognise a Radical SAM core domain in the interval 55 to 269 (FSSRTATFLI…AAYGRARGIP (215 aa)).

It belongs to the radical SAM superfamily. Lipoyl synthase family. [4Fe-4S] cluster is required as a cofactor.

It localises to the cytoplasm. It catalyses the reaction [[Fe-S] cluster scaffold protein carrying a second [4Fe-4S](2+) cluster] + N(6)-octanoyl-L-lysyl-[protein] + 2 oxidized [2Fe-2S]-[ferredoxin] + 2 S-adenosyl-L-methionine + 4 H(+) = [[Fe-S] cluster scaffold protein] + N(6)-[(R)-dihydrolipoyl]-L-lysyl-[protein] + 4 Fe(3+) + 2 hydrogen sulfide + 2 5'-deoxyadenosine + 2 L-methionine + 2 reduced [2Fe-2S]-[ferredoxin]. The protein operates within protein modification; protein lipoylation via endogenous pathway; protein N(6)-(lipoyl)lysine from octanoyl-[acyl-carrier-protein]: step 2/2. Its function is as follows. Catalyzes the radical-mediated insertion of two sulfur atoms into the C-6 and C-8 positions of the octanoyl moiety bound to the lipoyl domains of lipoate-dependent enzymes, thereby converting the octanoylated domains into lipoylated derivatives. This chain is Lipoyl synthase, found in Oleidesulfovibrio alaskensis (strain ATCC BAA-1058 / DSM 17464 / G20) (Desulfovibrio alaskensis).